A 592-amino-acid polypeptide reads, in one-letter code: Colicin-A (592 aa).

2 stretches are compositionally biased toward gly residues: residues 1–13 (MPGF…GDGT) and 23–34 (PEPGGGSHGNSG). Disordered stretches follow at residues 1-57 (MPGF…PGDS) and 373-395 (RQRQ…KAKD). The next 2 membrane-spanning stretches (helical) occupy residues 528–548 (WVLS…TLGA) and 555–575 (VPAI…GALI).

Belongs to the channel forming colicin family.

The protein localises to the cell membrane. Its function is as follows. This colicin is a channel-forming colicin. This class of transmembrane toxins depolarize the cytoplasmic membrane, leading to dissipation of cellular energy. Functionally, colicins are polypeptide toxins produced by and active against E.coli and closely related bacteria. In Citrobacter freundii, this protein is Colicin-A (caa).